Consider the following 304-residue polypeptide: Probable endonuclease 4 (304 aa).

Zn(2+) is bound by residues His-75, His-115, Glu-151, Asp-185, His-188, His-221, Asp-234, His-236, and Glu-266.

This sequence belongs to the AP endonuclease 2 family. It depends on Zn(2+) as a cofactor.

It catalyses the reaction Endonucleolytic cleavage to 5'-phosphooligonucleotide end-products.. Endonuclease IV plays a role in DNA repair. It cleaves phosphodiester bonds at apurinic or apyrimidinic (AP) sites, generating a 3'-hydroxyl group and a 5'-terminal sugar phosphate. This is Probable endonuclease 4 from Ureaplasma urealyticum serovar 10 (strain ATCC 33699 / Western).